A 181-amino-acid chain; its full sequence is ATP-dependent protease subunit HslV (181 aa).

Thr11 is a catalytic residue. Positions 166, 169, and 172 each coordinate Na(+).

This sequence belongs to the peptidase T1B family. HslV subfamily. A double ring-shaped homohexamer of HslV is capped on each side by a ring-shaped HslU homohexamer. The assembly of the HslU/HslV complex is dependent on binding of ATP.

The protein resides in the cytoplasm. It catalyses the reaction ATP-dependent cleavage of peptide bonds with broad specificity.. With respect to regulation, allosterically activated by HslU binding. Functionally, protease subunit of a proteasome-like degradation complex believed to be a general protein degrading machinery. The protein is ATP-dependent protease subunit HslV of Chlorobaculum tepidum (strain ATCC 49652 / DSM 12025 / NBRC 103806 / TLS) (Chlorobium tepidum).